The primary structure comprises 160 residues: SsrA-binding protein (160 aa).

This sequence belongs to the SmpB family.

It localises to the cytoplasm. Required for rescue of stalled ribosomes mediated by trans-translation. Binds to transfer-messenger RNA (tmRNA), required for stable association of tmRNA with ribosomes. tmRNA and SmpB together mimic tRNA shape, replacing the anticodon stem-loop with SmpB. tmRNA is encoded by the ssrA gene; the 2 termini fold to resemble tRNA(Ala) and it encodes a 'tag peptide', a short internal open reading frame. During trans-translation Ala-aminoacylated tmRNA acts like a tRNA, entering the A-site of stalled ribosomes, displacing the stalled mRNA. The ribosome then switches to translate the ORF on the tmRNA; the nascent peptide is terminated with the 'tag peptide' encoded by the tmRNA and targeted for degradation. The ribosome is freed to recommence translation, which seems to be the essential function of trans-translation. This is SsrA-binding protein from Yersinia enterocolitica serotype O:8 / biotype 1B (strain NCTC 13174 / 8081).